Consider the following 498-residue polypeptide: Diacylglycerol O-acyltransferase 1A (498 aa).

The disordered stretch occupies residues 1-67 (MAISDEPETV…ANSQPQQKQD (67 aa)). Helical transmembrane passes span 102 to 122 (HAGL…RLII), 146 to 166 (WPLF…FIVE), 178 to 198 (VVVV…VLVI), 203 to 223 (SAFL…LKLV), 253 to 273 (YPYN…TLCY), 295 to 315 (LIIF…PIVQ), and 342 to 362 (VWLC…AELL). The short motif at 369 to 375 (FYQDWWN) is the FYXDWWN motif element. Helical transmembrane passes span 410 to 430 (AVAL…CIAV), 432 to 452 (CHIF…LVFI), and 465 to 485 (VGNM…CVLL). Residue His424 is part of the active site.

The protein belongs to the membrane-bound acyltransferase family. Sterol o-acyltransferase subfamily. As to expression, highly expressed in flowers and pods. Expressed at low levels in roots, stems and leaves.

It is found in the endoplasmic reticulum membrane. The enzyme catalyses an acyl-CoA + a 1,2-diacyl-sn-glycerol = a triacyl-sn-glycerol + CoA. Its pathway is glycerolipid metabolism; triacylglycerol biosynthesis. Functionally, major contributor to triacylglycerol (TAG) synthesis and oil accumulation in developing seeds. Catalyzes the acylation of the sn-3 hydroxy group of sn-1,2-diacylglycerol using acyl-CoA. Has a marked preference for oleoyl-CoA (18:1) and sn-1,2-dioleoylglycerol over vernoloyl-CoA and sn-1,2-divernoloylglycerol. Can use oleoyl-CoA, linoleoyl-CoA and linolenoyl-CoA as substrates. In Glycine max (Soybean), this protein is Diacylglycerol O-acyltransferase 1A.